A 603-amino-acid chain; its full sequence is Polypeptide N-acetylgalactosaminyltransferase 9 (603 aa).

Residues 1–6 (MAVARK) lie on the Cytoplasmic side of the membrane. A helical; Signal-anchor for type II membrane protein membrane pass occupies residues 7 to 29 (IRTLLTVNILVFVGIVLFSVYCR). Residues 30–603 (LQGRSQELVR…IRNWIKHARH (574 aa)) are Lumenal-facing. Intrachain disulfides connect Cys141-Cys372 and Cys363-Cys442. The segment at 150–261 (LPQVSVVFIF…TGWAEPALSR (112 aa)) is catalytic subdomain A. Substrate-binding residues include Asp191 and Arg222. The Mn(2+) site is built by Asp245, His247, and His377. Residues 318–380 (PIRTPAMIGC…PCSRVAHIER (63 aa)) are catalytic subdomain B. Substrate is bound by residues Arg380 and Tyr385. The N-linked (GlcNAc...) asparagine glycan is linked to Asn460. In terms of domain architecture, Ricin B-type lectin spans 464-600 (TYGEVRNSKA…KWMIRNWIKH (137 aa)). Intrachain disulfides connect Cys477-Cys493, Cys525-Cys540, and Cys567-Cys587.

This sequence belongs to the glycosyltransferase 2 family. GalNAc-T subfamily. Mn(2+) serves as cofactor. In terms of tissue distribution, specifically expressed in brain. Not expressed in heart, placenta, lung, liver, skeletal muscle, kidney, pancreas, spleen, thymus, prostate, testis, ovary, small intestine, colon and leukocyte. In brain, it is expressed in cerebellum, frontal lobe, temporal lobe, putamen and spinal cord, weakly expressed in cerebral cortex. Not expressed in medulla and occipital pole.

It is found in the golgi apparatus membrane. The catalysed reaction is L-seryl-[protein] + UDP-N-acetyl-alpha-D-galactosamine = a 3-O-[N-acetyl-alpha-D-galactosaminyl]-L-seryl-[protein] + UDP + H(+). It carries out the reaction L-threonyl-[protein] + UDP-N-acetyl-alpha-D-galactosamine = a 3-O-[N-acetyl-alpha-D-galactosaminyl]-L-threonyl-[protein] + UDP + H(+). Its pathway is protein modification; protein glycosylation. Functionally, catalyzes the initial reaction in O-linked oligosaccharide biosynthesis, the transfer of an N-acetyl-D-galactosamine residue to a serine or threonine residue on the protein receptor. Does not glycosylate apomucin or SDC3. This Homo sapiens (Human) protein is Polypeptide N-acetylgalactosaminyltransferase 9 (GALNT9).